The primary structure comprises 315 residues: Glycine--tRNA ligase alpha subunit (315 aa).

This sequence belongs to the class-II aminoacyl-tRNA synthetase family. In terms of assembly, tetramer of two alpha and two beta subunits.

It localises to the cytoplasm. It catalyses the reaction tRNA(Gly) + glycine + ATP = glycyl-tRNA(Gly) + AMP + diphosphate. This is Glycine--tRNA ligase alpha subunit from Pseudomonas aeruginosa (strain LESB58).